The chain runs to 94 residues: PqqA binding protein (94 aa).

This sequence belongs to the PqqD family. Monomer. Interacts with PqqE.

It functions in the pathway cofactor biosynthesis; pyrroloquinoline quinone biosynthesis. Its function is as follows. Functions as a PqqA binding protein and presents PqqA to PqqE, in the pyrroloquinoline quinone (PQQ) biosynthetic pathway. The polypeptide is PqqA binding protein (Pseudomonas syringae pv. syringae (strain B728a)).